A 254-amino-acid chain; its full sequence is MGRVIRNQRKGAGSIFTSHTRLRQGAAKLRTLDYAERHGYIRGIVKQIVHDSGRGAPLAKVVFRDPYKYRLREEIFIANEGVHTGQFIYAGKKASLNVGNVLPLGSVPEGTIVSNVEEKPGDRGALARASGNYVIIIGHNPDENKTRVRLPSGAKKVISSDARGVIGVIAGGGRVDKPLLKAGRAFHKYRLKRNSWPKTRGVAMNPVDHPHGGGNHQHIGKASTISRGAVSGQKAGLIAARRTGLLRGSQKTQD.

A Glycyl lysine isopeptide (Lys-Gly) (interchain with G-Cter in ubiquitin) cross-link involves residue lysine 46. Serine 52 bears the Phosphoserine mark. Lysine 93 is covalently cross-linked (Glycyl lysine isopeptide (Lys-Gly) (interchain with G-Cter in ubiquitin)). Serine 95 bears the Phosphoserine mark. Glycyl lysine isopeptide (Lys-Gly) (interchain with G-Cter in ubiquitin) cross-links involve residues lysine 119 and lysine 145. Serine 159, serine 160, and serine 249 each carry phosphoserine.

It belongs to the universal ribosomal protein uL2 family. As to quaternary structure, component of the large ribosomal subunit (LSU). Mature yeast ribosomes consist of a small (40S) and a large (60S) subunit. The 40S small subunit contains 1 molecule of ribosomal RNA (18S rRNA) and 33 different proteins (encoded by 57 genes). The large 60S subunit contains 3 rRNA molecules (25S, 5.8S and 5S rRNA) and 46 different proteins (encoded by 81 genes).

The protein localises to the cytoplasm. Its function is as follows. Component of the ribosome, a large ribonucleoprotein complex responsible for the synthesis of proteins in the cell. The small ribosomal subunit (SSU) binds messenger RNAs (mRNAs) and translates the encoded message by selecting cognate aminoacyl-transfer RNA (tRNA) molecules. The large subunit (LSU) contains the ribosomal catalytic site termed the peptidyl transferase center (PTC), which catalyzes the formation of peptide bonds, thereby polymerizing the amino acids delivered by tRNAs into a polypeptide chain. The nascent polypeptides leave the ribosome through a tunnel in the LSU and interact with protein factors that function in enzymatic processing, targeting, and the membrane insertion of nascent chains at the exit of the ribosomal tunnel. In Saccharomyces cerevisiae (strain ATCC 204508 / S288c) (Baker's yeast), this protein is Large ribosomal subunit protein uL2B.